A 551-amino-acid polypeptide reads, in one-letter code: BAG family molecular chaperone regulator 8, chloroplastic (551 aa).

The span at 1-19 shows a compositional bias: basic residues; it reads MASHHHHNHNHVCSRHQNH. The segment at 1-46 is disordered; the sequence is MASHHHHNHNHVCSRHQNHHNNTPQFATSPNCCNKSNHPSPPPAED. A chloroplast-targeting transit peptide spans 1–52; the sequence is MASHHHHNHNHVCSRHQNHHNNTPQFATSPNCCNKSNHPSPPPAEDNLLHLV. Positions 20–38 are enriched in polar residues; the sequence is HNNTPQFATSPNCCNKSNH. The region spanning 131-160 is the IQ domain; sequence RDSAARVIQTHFRSYLVHRSISFRQLKELA. The BAG domain occupies 147 to 228; sequence VHRSISFRQL…RFVQYVDDCV (82 aa). A disordered region spans residues 246-281; it reads GKKPQGFGTSSEDEDNNADMSDDSEEVPVSSIDKRK. Positions 256 to 271 are enriched in acidic residues; that stretch reads SEDEDNNADMSDDSEE. S332 carries the post-translational modification Phosphoserine. Disordered stretches follow at residues 414–433 and 450–551; these read DEGK…KGSG and NVYK…KMEP. Over residues 479-499 the composition is skewed to basic and acidic residues; it reads GEEKGNVNEVEEIKYVPKENE. Residues 500–513 show a composition bias toward acidic residues; that stretch reads SFEEEEEKETDSEN. The span at 522 to 534 shows a compositional bias: basic and acidic residues; it reads EGDKRVTKKEVQH.

As to quaternary structure, binds to the ATPase domain of HSP70/HSC70 chaperones.

It localises to the plastid. Its subcellular location is the chloroplast. In terms of biological role, co-chaperone that regulates diverse cellular pathways, such as programmed cell death and stress responses. The chain is BAG family molecular chaperone regulator 8, chloroplastic (BAG1) from Arabidopsis thaliana (Mouse-ear cress).